Consider the following 328-residue polypeptide: Phenylalanine--tRNA ligase alpha subunit (328 aa).

Mg(2+) is bound at residue Glu253.

This sequence belongs to the class-II aminoacyl-tRNA synthetase family. Phe-tRNA synthetase alpha subunit type 1 subfamily. Tetramer of two alpha and two beta subunits. Mg(2+) serves as cofactor.

Its subcellular location is the cytoplasm. It carries out the reaction tRNA(Phe) + L-phenylalanine + ATP = L-phenylalanyl-tRNA(Phe) + AMP + diphosphate + H(+). This is Phenylalanine--tRNA ligase alpha subunit from Coxiella burnetii (strain CbuG_Q212) (Coxiella burnetii (strain Q212)).